Here is a 90-residue protein sequence, read N- to C-terminus: Small ribosomal subunit protein bS20 (90 aa).

It belongs to the bacterial ribosomal protein bS20 family.

Its function is as follows. Binds directly to 16S ribosomal RNA. In Francisella philomiragia subsp. philomiragia (strain ATCC 25017 / CCUG 19701 / FSC 153 / O#319-036), this protein is Small ribosomal subunit protein bS20.